We begin with the raw amino-acid sequence, 299 residues long: 4-hydroxy-tetrahydrodipicolinate synthase (299 aa).

Residue Thr-47 coordinates pyruvate. Tyr-136 serves as the catalytic Proton donor/acceptor. Lys-164 functions as the Schiff-base intermediate with substrate in the catalytic mechanism. Ala-205 contacts pyruvate.

Belongs to the DapA family. Homotetramer; dimer of dimers.

It localises to the cytoplasm. The catalysed reaction is L-aspartate 4-semialdehyde + pyruvate = (2S,4S)-4-hydroxy-2,3,4,5-tetrahydrodipicolinate + H2O + H(+). It functions in the pathway amino-acid biosynthesis; L-lysine biosynthesis via DAP pathway; (S)-tetrahydrodipicolinate from L-aspartate: step 3/4. Its function is as follows. Catalyzes the condensation of (S)-aspartate-beta-semialdehyde [(S)-ASA] and pyruvate to 4-hydroxy-tetrahydrodipicolinate (HTPA). In Pediococcus pentosaceus (strain ATCC 25745 / CCUG 21536 / LMG 10740 / 183-1w), this protein is 4-hydroxy-tetrahydrodipicolinate synthase.